The chain runs to 208 residues: Small ribosomal subunit protein uS4 (208 aa).

The S4 RNA-binding domain occupies 97 to 160 (TRLDNVCYRM…QKQLRVQEAL (64 aa)).

The protein belongs to the universal ribosomal protein uS4 family. Part of the 30S ribosomal subunit. Contacts protein S5. The interaction surface between S4 and S5 is involved in control of translational fidelity.

Functionally, one of the primary rRNA binding proteins, it binds directly to 16S rRNA where it nucleates assembly of the body of the 30S subunit. In terms of biological role, with S5 and S12 plays an important role in translational accuracy. The chain is Small ribosomal subunit protein uS4 from Xanthomonas oryzae pv. oryzae (strain MAFF 311018).